The chain runs to 129 residues: Cytochrome c3 (129 aa).

The first 22 residues, 1–22 (MRKLFFCGVLALAVAFALPVVA), serve as a signal peptide directing secretion. Residues His-44, His-47, Cys-52, Cys-55, His-56, His-57, Cys-68, Cys-73, His-74, His-92, Cys-101, Cys-104, His-105, Cys-122, Cys-127, and His-128 each contribute to the heme c site.

Post-translationally, binds 4 heme c groups per subunit.

The protein resides in the periplasm. Participates in sulfate respiration coupled with phosphorylation by transferring electrons from the enzyme dehydrogenase to ferredoxin. This Nitratidesulfovibrio vulgaris (strain ATCC 29579 / DSM 644 / CCUG 34227 / NCIMB 8303 / VKM B-1760 / Hildenborough) (Desulfovibrio vulgaris) protein is Cytochrome c3.